Consider the following 320-residue polypeptide: Myoblast determination protein 1 (320 aa).

Met-1 participates in a covalent cross-link: Peptide (Met-Gly) (interchain with G-Cter in ubiquitin). An N6-methyllysine; by EHMT2 modification is found at Lys-104. In terms of domain architecture, bHLH spans 109 to 160 (DRRKAATMRERRRLSKVNEAFETLKRCTSSNPNQRLPKVEILRNAIRYIEGL). Disordered stretches follow at residues 174–219 (AAAA…PPSG) and 262–320 (ESPA…YQVL). 2 stretches are compositionally biased toward polar residues: residues 197–207 (SDASSPRSNCS) and 291–301 (GESSGDPTQSP).

As to quaternary structure, efficient DNA binding requires dimerization with another bHLH protein. Seems to form active heterodimers with ITF-2. Interacts with SUV39H1. Interacts with DDX5. Interacts with CHD2. Interacts with TSC22D3. Interacts with SETD3. Interacts with P-TEFB complex; promotes the transcriptional activity of MYOD1 through its CDK9-mediated phosphorylation. Interacts with CSRP3. Interacts with NUPR1. In terms of processing, phosphorylated by CDK9. This phosphorylation promotes its function in muscle differentiation. Post-translationally, acetylated by a complex containing EP300 and PCAF. The acetylation is essential to activate target genes. Conversely, its deacetylation by SIRT1 inhibits its function. Ubiquitinated on the N-terminus; which is required for proteasomal degradation. In terms of processing, methylation at Lys-104 by EHMT2/G9a inhibits myogenic activity.

It is found in the nucleus. Functionally, acts as a transcriptional activator that promotes transcription of muscle-specific target genes and plays a role in muscle differentiation. Together with MYF5 and MYOG, co-occupies muscle-specific gene promoter core region during myogenesis. Induces fibroblasts to differentiate into myoblasts. Interacts with and is inhibited by the twist protein. This interaction probably involves the basic domains of both proteins. This chain is Myoblast determination protein 1 (MYOD1), found in Homo sapiens (Human).